Consider the following 239-residue polypeptide: Orotidine 5'-phosphate decarboxylase (239 aa).

Substrate contacts are provided by residues Asp-10, Lys-32, 59–68 (DLKLHDIPNT), Thr-122, Arg-184, Gln-193, Gly-213, and Arg-214. Lys-61 (proton donor) is an active-site residue.

This sequence belongs to the OMP decarboxylase family. Type 1 subfamily. As to quaternary structure, homodimer.

The enzyme catalyses orotidine 5'-phosphate + H(+) = UMP + CO2. It participates in pyrimidine metabolism; UMP biosynthesis via de novo pathway; UMP from orotate: step 2/2. Its function is as follows. Catalyzes the decarboxylation of orotidine 5'-monophosphate (OMP) to uridine 5'-monophosphate (UMP). The sequence is that of Orotidine 5'-phosphate decarboxylase from Geobacillus sp. (strain WCH70).